The sequence spans 147 residues: Hemoglobin subunit beta (147 aa).

Val-2 carries the N-acetylvaline modification. Positions 3–147 (HMSAEEKGIV…VAAALAHKYH (145 aa)) constitute a Globin domain. The residue at position 13 (Thr-13) is a Phosphothreonine. Position 45 is a phosphoserine (Ser-45). At Lys-60 the chain carries N6-acetyllysine. His-64 is a binding site for heme b. Lys-83 bears the N6-acetyllysine mark. Residue His-93 participates in heme b binding. The residue at position 94 (Cys-94) is an S-nitrosocysteine. Lys-145 is subject to N6-acetyllysine.

This sequence belongs to the globin family. Heterotetramer of two alpha chains and two beta chains. Red blood cells.

Involved in oxygen transport from the lung to the various peripheral tissues. The protein is Hemoglobin subunit beta (HBB) of Scalopus aquaticus (Eastern mole).